A 362-amino-acid chain; its full sequence is DLA class I histocompatibility antigen, A9/A9 alpha chain (362 aa).

A signal peptide spans Met1–Ala24. The interval Gly25 to Ala114 is alpha-1. Residues Gly25–Thr306 lie on the Extracellular side of the membrane. Residue Asn110 is glycosylated (N-linked (GlcNAc...) asparagine). An alpha-2 region spans residues Gly115 to Ala207. 2 cysteine pairs are disulfide-bonded: Cys125–Cys189 and Cys228–Cys284. An alpha-3 region spans residues Asp208–Trp299. Positions Pro210–Thr296 constitute an Ig-like C1-type domain. The segment at Glu300 to Thr306 is connecting peptide. Residues Ile307–Trp329 form a helical membrane-spanning segment. The Cytoplasmic portion of the chain corresponds to Arg330–Val362. The tract at residues Arg333–Val362 is disordered.

This sequence belongs to the MHC class I family. Heterodimer of an alpha chain and a beta chain (beta-2-microglobulin).

Its subcellular location is the membrane. Involved in the presentation of foreign antigens to the immune system. The protein is DLA class I histocompatibility antigen, A9/A9 alpha chain of Canis lupus familiaris (Dog).